The chain runs to 381 residues: Dual-specificity RNA methyltransferase RlmN (381 aa).

The Proton acceptor role is filled by Glu-95. The region spanning Asp-101–Asp-339 is the Radical SAM core domain. Cys-108 and Cys-345 are oxidised to a cystine. The [4Fe-4S] cluster site is built by Cys-115, Cys-119, and Cys-122. S-adenosyl-L-methionine contacts are provided by residues Gly-169 to Glu-170, Ser-201, Ser-223 to His-225, and Asn-302. Cys-345 serves as the catalytic S-methylcysteine intermediate.

The protein belongs to the radical SAM superfamily. RlmN family. It depends on [4Fe-4S] cluster as a cofactor.

The protein resides in the cytoplasm. It catalyses the reaction adenosine(2503) in 23S rRNA + 2 reduced [2Fe-2S]-[ferredoxin] + 2 S-adenosyl-L-methionine = 2-methyladenosine(2503) in 23S rRNA + 5'-deoxyadenosine + L-methionine + 2 oxidized [2Fe-2S]-[ferredoxin] + S-adenosyl-L-homocysteine. The enzyme catalyses adenosine(37) in tRNA + 2 reduced [2Fe-2S]-[ferredoxin] + 2 S-adenosyl-L-methionine = 2-methyladenosine(37) in tRNA + 5'-deoxyadenosine + L-methionine + 2 oxidized [2Fe-2S]-[ferredoxin] + S-adenosyl-L-homocysteine. Specifically methylates position 2 of adenine 2503 in 23S rRNA and position 2 of adenine 37 in tRNAs. m2A2503 modification seems to play a crucial role in the proofreading step occurring at the peptidyl transferase center and thus would serve to optimize ribosomal fidelity. The protein is Dual-specificity RNA methyltransferase RlmN of Alcanivorax borkumensis (strain ATCC 700651 / DSM 11573 / NCIMB 13689 / SK2).